Consider the following 358-residue polypeptide: uncharacterized protein (358 aa).

Over residues 70–88 (RPAATAGTTPATGASGSAR) the composition is skewed to low complexity. Residues 70 to 93 (RPAATAGTTPATGASGSARPTDAA) are disordered. The 176-residue stretch at 178–353 (PSTCRGDNVS…AFSAAIQAGE (176 aa)) folds into the Macro domain.

This is an uncharacterized protein from Mycobacterium bovis (strain ATCC BAA-935 / AF2122/97).